A 212-amino-acid polypeptide reads, in one-letter code: Ropporin-1A (212 aa).

The 38-residue stretch at 12 to 49 (PELPKMLKEFAKAAIRVQPQDLIQWAADYFEALSRGET) folds into the RIIa domain. A Phosphoserine modification is found at Ser-56. Residues 209–212 (VQLE) form an interaction with RHPN1 region.

Belongs to the ropporin family. As to quaternary structure, homodimer. Interacts with AKAP3 and RHPN1. May interact with SPA17. Interacts with FSCB; the interaction increases upon spermatozoa capacitation conditions. Interacts with CFAP61. Sumoylated, sumoylation decreases upon spermatozoa capacitation conditions. Testis specific in adult. Overexpressed in hematologic tumor cells.

It is found in the cell projection. The protein localises to the cilium. The protein resides in the flagellum. Important for male fertility. With ROPN1L, involved in fibrous sheath integrity and sperm motility, plays a role in PKA-dependent signaling processes required for spermatozoa capacitation. This is Ropporin-1A (ROPN1) from Homo sapiens (Human).